The primary structure comprises 622 residues: Serine/threonine-protein kinase MAK (622 aa).

Residues 4 to 284 (YTTMKQLGDG…ASQALKHPYF (281 aa)) enclose the Protein kinase domain. ATP contacts are provided by residues 10 to 18 (LGDGTYGSV) and Lys33. The active-site Proton acceptor is the Asp125. Phosphothreonine; by autocatalysis is present on Thr157. Position 159 is a phosphotyrosine; by autocatalysis (Tyr159). Residues 301–371 (QTLHKQLQPL…QGHQKPPQTM (71 aa)) form a disordered region. Over residues 336–355 (QPKQGHQPLQTIQPPQNTVT) the composition is skewed to polar residues.

The protein belongs to the protein kinase superfamily. CMGC Ser/Thr protein kinase family. CDC2/CDKX subfamily. Interacts with AR and CDK20. Found in a complex containing MAK, AR and NCOA3. Interacts with FZR1 (via WD repeats). Interacts with RP1. The cofactor is Mg(2+). In terms of processing, autophosphorylated. Phosphorylated on serine and threonine residues. In pre- and postmeiotic male germ cells in testis. In photoreceptor cells of the retina and in the olfactory receptors, and in certain epithelia of the respiratory tract and choroid plexus (brain).

The protein resides in the nucleus. It localises to the cytoplasm. It is found in the cytoskeleton. Its subcellular location is the microtubule organizing center. The protein localises to the centrosome. The protein resides in the spindle. It localises to the midbody. It is found in the cell projection. Its subcellular location is the cilium. The protein localises to the photoreceptor outer segment. The protein resides in the photoreceptor inner segment. It carries out the reaction L-seryl-[protein] + ATP = O-phospho-L-seryl-[protein] + ADP + H(+). The catalysed reaction is L-threonyl-[protein] + ATP = O-phospho-L-threonyl-[protein] + ADP + H(+). Functionally, essential for the regulation of ciliary length and required for the long-term survival of photoreceptors. Could have an important function in sensory cells and in spermatogenesis. May participate in signaling pathways used in visual and olfactory sensory transduction. Phosphorylates FZR1 in a cell cycle-dependent manner. Plays a role in the transcriptional coactivation of AR. This Mus musculus (Mouse) protein is Serine/threonine-protein kinase MAK (Mak).